The chain runs to 254 residues: Hydroxyacylglutathione hydrolase (254 aa).

Zn(2+) contacts are provided by His-54, His-56, Asp-58, His-59, His-111, Asp-130, and His-168.

The protein belongs to the metallo-beta-lactamase superfamily. Glyoxalase II family. Monomer. It depends on Zn(2+) as a cofactor.

It carries out the reaction an S-(2-hydroxyacyl)glutathione + H2O = a 2-hydroxy carboxylate + glutathione + H(+). The protein operates within secondary metabolite metabolism; methylglyoxal degradation; (R)-lactate from methylglyoxal: step 2/2. Thiolesterase that catalyzes the hydrolysis of S-D-lactoyl-glutathione to form glutathione and D-lactic acid. This chain is Hydroxyacylglutathione hydrolase, found in Legionella pneumophila (strain Paris).